The sequence spans 216 residues: Ribosome maturation factor RimP (216 aa).

It belongs to the RimP family.

It is found in the cytoplasm. In terms of biological role, required for maturation of 30S ribosomal subunits. This is Ribosome maturation factor RimP from Bartonella quintana (strain Toulouse) (Rochalimaea quintana).